Here is an 828-residue protein sequence, read N- to C-terminus: Periplasmic nitrate reductase (828 aa).

Residues 1 to 31 (MKLSRRSFMKANAVAAAAAAAGLSVPGVARA) constitute a signal peptide (tat-type signal). In terms of domain architecture, 4Fe-4S Mo/W bis-MGD-type spans 39–95 (IKWDKAPCRFCGTGCGVLVGTQQGRVVACQGDPDAPVNRGLNCIKGYFLPKIMYGKD). Positions 46, 49, 53, and 81 each coordinate [4Fe-4S] cluster. Mo-bis(molybdopterin guanine dinucleotide) contacts are provided by residues Lys-83, Gln-150, Asn-175, Cys-179, 212-219 (WGANMAEM), 243-247 (STYQH), 262-264 (QSD), Met-372, Gln-376, Asn-482, 508-509 (SD), Lys-531, Asp-558, and 718-727 (TGRVLEHWHT). A substrate-binding site is contributed by Phe-794. Positions 802 and 819 each coordinate Mo-bis(molybdopterin guanine dinucleotide).

The protein belongs to the prokaryotic molybdopterin-containing oxidoreductase family. NasA/NapA/NarB subfamily. In terms of assembly, component of the periplasmic nitrate reductase NapAB complex composed of NapA and NapB. [4Fe-4S] cluster is required as a cofactor. It depends on Mo-bis(molybdopterin guanine dinucleotide) as a cofactor. Predicted to be exported by the Tat system. The position of the signal peptide cleavage has not been experimentally proven.

It localises to the periplasm. The catalysed reaction is 2 Fe(II)-[cytochrome] + nitrate + 2 H(+) = 2 Fe(III)-[cytochrome] + nitrite + H2O. Its function is as follows. Catalytic subunit of the periplasmic nitrate reductase complex NapAB. Receives electrons from NapB and catalyzes the reduction of nitrate to nitrite. The sequence is that of Periplasmic nitrate reductase from Escherichia coli O9:H4 (strain HS).